Here is a 151-residue protein sequence, read N- to C-terminus: Myosin light polypeptide 6 (151 aa).

Cys2 bears the N-acetylcysteine mark. The EF-hand 1 domain occupies 7 to 42 (DQTAEFKEAFQLFDRTGDGKILYSQCGDVMRALGQN). At Ser57 the chain carries Phosphoserine. Residue Lys81 is modified to N6-acetyllysine. 2 EF-hand domains span residues 84–119 (GTYEDYVEGLRVFDKEGNGTVMGAEIRHVLVTLGEK) and 119–151 (KMTEEEVEMLVAGHEDSNGCINYEELLRMVLNG).

As to quaternary structure, myosin is a hexamer of 2 heavy chains and 4 light chains. Interacts with SPATA6.

Its function is as follows. Regulatory light chain of myosin. Does not bind calcium. The protein is Myosin light polypeptide 6 (Myl6) of Rattus norvegicus (Rat).